The chain runs to 131 residues: ITEFSWNKYLYELIQRFEYWTVFCTSVNTSSSEGFLIGVNYLGPYCDKAIVDGNIMHANYIFWRNSTIMALSHNSVLDTPKFKCRCNNALIVNLKEKELNEMVIGLLRKGKLLIRNNGKLLNFGNHFINTP.

The Nidovirus-type SAM-dependent 2'-O-MTase domain occupies 1 to 128; that stretch reads ITEFSWNKYL…KLLNFGNHFI (128 aa).

The replicase polyprotein of coronaviruses is a multifunctional protein: it contains the activities necessary for the transcription of negative stranded RNA, leader RNA, subgenomic mRNAs and progeny virion RNA as well as proteinases responsible for the cleavage of the polyprotein into functional products. This is Replicase polyprotein 1ab (rep) from Sus scrofa (Pig).